Reading from the N-terminus, the 368-residue chain is MPDIVNRKVEHVEIAAFENVDGLSSSTFLNDVILVHQGFPGISFSEINTKTKFFRKEISAPIMVTGMTGGRNELGRINRIIAEVAEKFGIPMGVGSQRVAIEKAEARESFTIVRKVAPTIPIIANLGMPQLVKGYGLKEFQDAIQMIEADAIAVHLNPAQEVFQPEGEPEYQIYALERLRDISKELSVPIIVKESGNGISMETAKLLYSYGIKNFDTSGQGGTNWIAIEMIRDIRRGNWKAESAKNFLDWGVPTAASIIEVRYSIPDAFLVGSGGIRSGLDAAKAIALGADIAGMALPVLKSAIEGKESLEQFFRKIIFELKATMMLTGSKNVEALKRSSIVILGKLKEWAEYRGINLSIYEKVRKRE.

Substrate is bound at residue 7–8; that stretch reads RK. Residues Thr-65, 66 to 68, Ser-96, and Asn-125 each bind FMN; that span reads GMT. 96–98 lines the substrate pocket; the sequence is SQR. Substrate is bound at residue Gln-160. Glu-161 lines the Mg(2+) pocket. FMN contacts are provided by residues Lys-193, Ser-218, Thr-223, 275–277, and 296–297; these read GIR and AL.

Belongs to the IPP isomerase type 2 family. As to quaternary structure, homooctamer. Dimer of tetramers. Requires FMN as cofactor. It depends on NADPH as a cofactor. Mg(2+) serves as cofactor.

The protein localises to the cytoplasm. It carries out the reaction isopentenyl diphosphate = dimethylallyl diphosphate. Functionally, involved in the biosynthesis of isoprenoids. Catalyzes the 1,3-allylic rearrangement of the homoallylic substrate isopentenyl (IPP) to its allylic isomer, dimethylallyl diphosphate (DMAPP). The protein is Isopentenyl-diphosphate delta-isomerase of Saccharolobus solfataricus (strain ATCC 35092 / DSM 1617 / JCM 11322 / P2) (Sulfolobus solfataricus).